The following is a 223-amino-acid chain: Killer cell lectin-like receptor subfamily B member 1A (223 aa).

The Cytoplasmic portion of the chain corresponds to 1–43; the sequence is MDTARVYLSLKPSKTAAGAQCVSPPSLPPDACRCPRSHRLALK. An LCK-binding motif motif is present at residues 32-35; it reads CRCP. Residues 44–63 traverse the membrane as a helical; Signal-anchor for type II membrane protein segment; the sequence is LSCAGLILLVLALVGMSILV. Residues 64–223 are Extracellular-facing; that stretch reads RVLVQKPSVE…LKCECMCNDS (160 aa). The region spanning 93–212 is the C-type lectin domain; it reads KCPKDWLSHR…DSDNIWVCQK (120 aa). Disulfide bonds link Cys-94–Cys-105, Cys-122–Cys-210, and Cys-189–Cys-202.

In terms of assembly, homodimer; disulfide-linked. Interacts with tyrosine kinase LCK. As to expression, expressed in natural killer cells.

The protein resides in the membrane. Plays a stimulatory role on natural killer (NK) cell cytotoxicity. The protein is Killer cell lectin-like receptor subfamily B member 1A (Klrb1a) of Rattus norvegicus (Rat).